The following is a 160-amino-acid chain: Nucleotide-binding protein Noc_2254 (160 aa).

This sequence belongs to the YajQ family.

In terms of biological role, nucleotide-binding protein. The polypeptide is Nucleotide-binding protein Noc_2254 (Nitrosococcus oceani (strain ATCC 19707 / BCRC 17464 / JCM 30415 / NCIMB 11848 / C-107)).